We begin with the raw amino-acid sequence, 441 residues long: Putative transporter AmpG 1 (441 aa).

Helical transmembrane passes span 5–25 (SHLL…MITG), 42–62 (IGIL…APIF), 78–98 (LSWI…FSFL), 104–124 (LVLF…QDTI), 143–163 (GIYI…AIYL), 171–191 (EIYK…IVAA), 249–269 (SGND…LVLY), 297–317 (VGKF…GFIM), 325–345 (SIFL…FLEI), 352–372 (LLFI…TAYI), 390–410 (FLSS…GYMV), and 413–433 (FGWQ…LLIL).

It belongs to the major facilitator superfamily.

Its subcellular location is the cell inner membrane. The sequence is that of Putative transporter AmpG 1 (ampG1) from Rickettsia felis (strain ATCC VR-1525 / URRWXCal2) (Rickettsia azadi).